Reading from the N-terminus, the 474-residue chain is 3-isopropylmalate dehydratase large subunit (474 aa).

Positions 352, 413, and 416 each coordinate [4Fe-4S] cluster.

It belongs to the aconitase/IPM isomerase family. LeuC type 1 subfamily. As to quaternary structure, heterodimer of LeuC and LeuD. [4Fe-4S] cluster is required as a cofactor.

The catalysed reaction is (2R,3S)-3-isopropylmalate = (2S)-2-isopropylmalate. The protein operates within amino-acid biosynthesis; L-leucine biosynthesis; L-leucine from 3-methyl-2-oxobutanoate: step 2/4. In terms of biological role, catalyzes the isomerization between 2-isopropylmalate and 3-isopropylmalate, via the formation of 2-isopropylmaleate. The sequence is that of 3-isopropylmalate dehydratase large subunit from Pseudomonas syringae pv. syringae (strain B728a).